The sequence spans 157 residues: MLNTTQQSLLVFIGVFFLIFGVDQAIKHAILEGFRYESLMIDIVLVFNKGVAFSLLSFLEGGLKYLQILLILGLFIFLMRQKELFKNHAIEFGMVFGAGVSNVLDRFVHGGVVDYVYYHYGFDFAIFNFADVMIDVGVGVLLLRQFFFKQKQNKIKA.

4 helical membrane passes run 10–30 (LVFI…KHAI), 36–56 (YESL…FSLL), 58–78 (FLEG…FIFL), and 84–104 (LFKN…SNVL). Catalysis depends on residues aspartate 114 and aspartate 131. A helical transmembrane segment spans residues 122 to 142 (FDFAIFNFADVMIDVGVGVLL).

Belongs to the peptidase A8 family.

It is found in the cell inner membrane. It carries out the reaction Release of signal peptides from bacterial membrane prolipoproteins. Hydrolyzes -Xaa-Yaa-Zaa-|-(S,diacylglyceryl)Cys-, in which Xaa is hydrophobic (preferably Leu), and Yaa (Ala or Ser) and Zaa (Gly or Ala) have small, neutral side chains.. Its pathway is protein modification; lipoprotein biosynthesis (signal peptide cleavage). Functionally, this protein specifically catalyzes the removal of signal peptides from prolipoproteins. This is Lipoprotein signal peptidase from Helicobacter pylori (strain P12).